The chain runs to 164 residues: Lipoprotein signal peptidase (164 aa).

3 consecutive transmembrane segments (helical) span residues 12–32 (FLWL…WIVA), 70–90 (WLFT…LKET), and 93–113 (QQVM…GNVF). Residues D123 and D141 contribute to the active site. A helical membrane pass occupies residues 133–153 (YWPAFNVADSAICLGAFLLVI).

It belongs to the peptidase A8 family.

Its subcellular location is the cell inner membrane. It catalyses the reaction Release of signal peptides from bacterial membrane prolipoproteins. Hydrolyzes -Xaa-Yaa-Zaa-|-(S,diacylglyceryl)Cys-, in which Xaa is hydrophobic (preferably Leu), and Yaa (Ala or Ser) and Zaa (Gly or Ala) have small, neutral side chains.. The protein operates within protein modification; lipoprotein biosynthesis (signal peptide cleavage). Functionally, this protein specifically catalyzes the removal of signal peptides from prolipoproteins. The chain is Lipoprotein signal peptidase from Pseudoalteromonas atlantica (strain T6c / ATCC BAA-1087).